Consider the following 184-residue polypeptide: Shikimate kinase (184 aa).

17-22 is an ATP binding site; sequence SVGKTS. Residue Thr21 coordinates Mg(2+). Asp39 and Gly85 together coordinate substrate.

It belongs to the shikimate kinase family. In terms of assembly, monomer. The cofactor is Mg(2+).

It localises to the cytoplasm. It carries out the reaction shikimate + ATP = 3-phosphoshikimate + ADP + H(+). Its pathway is metabolic intermediate biosynthesis; chorismate biosynthesis; chorismate from D-erythrose 4-phosphate and phosphoenolpyruvate: step 5/7. Its function is as follows. Catalyzes the specific phosphorylation of the 3-hydroxyl group of shikimic acid using ATP as a cosubstrate. The polypeptide is Shikimate kinase (Chlamydia muridarum (strain MoPn / Nigg)).